The sequence spans 269 residues: Phosphatidylglycerol--prolipoprotein diacylglyceryl transferase (269 aa).

7 consecutive transmembrane segments (helical) span residues 17-37 (IGPI…MLGW), 59-79 (FLVW…VLFY), 95-115 (WQGG…IIAF), 123-143 (LFQV…FGRI), 181-201 (AGLE…LTGI), 206-226 (GALS…SEFF), and 242-262 (MGQL…AWAL). Position 142 (Arg-142) interacts with a 1,2-diacyl-sn-glycero-3-phospho-(1'-sn-glycerol).

The protein belongs to the Lgt family.

The protein localises to the cell inner membrane. The catalysed reaction is L-cysteinyl-[prolipoprotein] + a 1,2-diacyl-sn-glycero-3-phospho-(1'-sn-glycerol) = an S-1,2-diacyl-sn-glyceryl-L-cysteinyl-[prolipoprotein] + sn-glycerol 1-phosphate + H(+). It functions in the pathway protein modification; lipoprotein biosynthesis (diacylglyceryl transfer). In terms of biological role, catalyzes the transfer of the diacylglyceryl group from phosphatidylglycerol to the sulfhydryl group of the N-terminal cysteine of a prolipoprotein, the first step in the formation of mature lipoproteins. The protein is Phosphatidylglycerol--prolipoprotein diacylglyceryl transferase of Paramagnetospirillum magneticum (strain ATCC 700264 / AMB-1) (Magnetospirillum magneticum).